The primary structure comprises 161 residues: MSTPNPPATNSTTSEDRLLCLTILGYRKQGMSEEAYRKHMIEHSAPLTKDLMIKYGILRWTVKCPDRSKIHNPTETRELMYEIMDPQMANIADYDCFSQVVFRNFEDYKKIKDDPWYKEHLVGDHENFADTKRSKMTIGWITQFIDRGVVTEGFEGFPGPK.

In terms of domain architecture, EthD spans 29 to 131; that stretch reads QGMSEEAYRK…VGDHENFADT (103 aa).

Belongs to the tpcK family.

It carries out the reaction atrochrysone carboxylate + H(+) = atrochrysone + CO2. It participates in secondary metabolite biosynthesis. Its function is as follows. Decarboxylase; part of the gene cluster that mediates the biosynthesis of monodictyphenone, a prenyl xanthone derivative. The pathway begins with the synthesis of atrochrysone thioester by the polyketide synthase (PKS) mdpG. The atrochrysone carboxyl ACP thioesterase mdpF then breaks the thioester bond and releases the atrochrysone carboxylic acid from mdpG. The atrochrysone carboxylic acid is then converted to atrochrysone which is further transformed into emodin anthrone by mdpH-1 and mdpH-2. Emodin is further modified to yield monodictyphenone via several steps involving mdpB, mdpC mdpJ, mdpK and mdpL. These enzymes with xptA, xptB and xptC are also proposed to be involved in the synthesis of shamixanthone from emodin. Especially, direct reduction of emodin by the short chain dehydrogenase mdpC followed by dehydration catalyzed by the scytalone dehydratase-like protein mdpB gives loss of oxygen and formation of chrysophanol intermediate in two simple steps. In Emericella nidulans (strain FGSC A4 / ATCC 38163 / CBS 112.46 / NRRL 194 / M139) (Aspergillus nidulans), this protein is Decarboxylase.